The chain runs to 223 residues: MTQDEMKQAVARAAIDYVVAGEIIGVGTGSTANFFIDELGKIKDRIKGAVASSEATAERLRAHGITIFDLNDIDSMSVYIDGADEITAQGAMIKGGGAALTREKIVASVAKKFVCIADGSKLVDKLGKFPLPVEVIPMAQAVVARKLAALGGEPRLRVKDGKAVVTDNGCYIIDVLGLQIEDPATLEAQINDIVGVVTVGLFARRGADIALLGTADGVNSLSF.

Substrate-binding positions include 28–31 (TGST), 81–84 (DGAD), and 94–97 (KGGG). The active-site Proton acceptor is Glu103. Lys121 provides a ligand contact to substrate.

This sequence belongs to the ribose 5-phosphate isomerase family. Homodimer.

It catalyses the reaction aldehydo-D-ribose 5-phosphate = D-ribulose 5-phosphate. Its pathway is carbohydrate degradation; pentose phosphate pathway; D-ribose 5-phosphate from D-ribulose 5-phosphate (non-oxidative stage): step 1/1. In terms of biological role, catalyzes the reversible conversion of ribose-5-phosphate to ribulose 5-phosphate. This is Ribose-5-phosphate isomerase A from Janthinobacterium sp. (strain Marseille) (Minibacterium massiliensis).